A 154-amino-acid polypeptide reads, in one-letter code: Putative pre-16S rRNA nuclease (154 aa).

Belongs to the YqgF nuclease family.

The protein localises to the cytoplasm. Functionally, could be a nuclease involved in processing of the 5'-end of pre-16S rRNA. This Rickettsia rickettsii (strain Iowa) protein is Putative pre-16S rRNA nuclease.